Consider the following 1360-residue polypeptide: DNA-directed RNA polymerase subunit beta (1360 aa).

The protein belongs to the RNA polymerase beta chain family. The RNAP catalytic core consists of 2 alpha, 1 beta, 1 beta' and 1 omega subunit. When a sigma factor is associated with the core the holoenzyme is formed, which can initiate transcription.

It catalyses the reaction RNA(n) + a ribonucleoside 5'-triphosphate = RNA(n+1) + diphosphate. In terms of biological role, DNA-dependent RNA polymerase catalyzes the transcription of DNA into RNA using the four ribonucleoside triphosphates as substrates. The protein is DNA-directed RNA polymerase subunit beta of Magnetococcus marinus (strain ATCC BAA-1437 / JCM 17883 / MC-1).